Reading from the N-terminus, the 214-residue chain is Ribosomal RNA large subunit methyltransferase E (214 aa).

The S-adenosyl-L-methionine site is built by Gly-68, Trp-70, Asp-88, Asp-104, and Asp-129. The active-site Proton acceptor is Lys-169.

Belongs to the class I-like SAM-binding methyltransferase superfamily. RNA methyltransferase RlmE family.

The protein resides in the cytoplasm. The catalysed reaction is uridine(2552) in 23S rRNA + S-adenosyl-L-methionine = 2'-O-methyluridine(2552) in 23S rRNA + S-adenosyl-L-homocysteine + H(+). Specifically methylates the uridine in position 2552 of 23S rRNA at the 2'-O position of the ribose in the fully assembled 50S ribosomal subunit. This Magnetococcus marinus (strain ATCC BAA-1437 / JCM 17883 / MC-1) protein is Ribosomal RNA large subunit methyltransferase E.